Reading from the N-terminus, the 245-residue chain is Probable 2-phosphosulfolactate phosphatase (245 aa).

This sequence belongs to the ComB family. The cofactor is Mg(2+).

It catalyses the reaction (2R)-O-phospho-3-sulfolactate + H2O = (2R)-3-sulfolactate + phosphate. In Synechococcus sp. (strain RCC307), this protein is Probable 2-phosphosulfolactate phosphatase.